A 473-amino-acid polypeptide reads, in one-letter code: Ribulose bisphosphate carboxylase large chain (473 aa).

2 residues coordinate substrate: asparagine 116 and threonine 166. The active-site Proton acceptor is the lysine 168. Residue lysine 170 participates in substrate binding. Residues lysine 194, aspartate 196, and glutamate 197 each coordinate Mg(2+). Lysine 194 carries the post-translational modification N6-carboxylysine. Catalysis depends on histidine 287, which acts as the Proton acceptor. Residues arginine 288, histidine 320, and serine 372 each contribute to the substrate site.

It belongs to the RuBisCO large chain family. Type I subfamily. In terms of assembly, heterohexadecamer of 8 large chains and 8 small chains. The cofactor is Mg(2+).

It carries out the reaction 2 (2R)-3-phosphoglycerate + 2 H(+) = D-ribulose 1,5-bisphosphate + CO2 + H2O. The catalysed reaction is D-ribulose 1,5-bisphosphate + O2 = 2-phosphoglycolate + (2R)-3-phosphoglycerate + 2 H(+). In terms of biological role, ruBisCO catalyzes two reactions: the carboxylation of D-ribulose 1,5-bisphosphate, the primary event in carbon dioxide fixation, as well as the oxidative fragmentation of the pentose substrate. Both reactions occur simultaneously and in competition at the same active site. The polypeptide is Ribulose bisphosphate carboxylase large chain (Nitrosomonas eutropha (strain DSM 101675 / C91 / Nm57)).